Reading from the N-terminus, the 1357-residue chain is Vascular endothelial growth factor receptor 2 (1357 aa).

A signal peptide spans 1–22; it reads MAKTSYALLLLDILLTFNVAKA. Over 23–774 the chain is Extracellular; it reads IELRFVPDPP…GAEEKMNVEL (752 aa). Ig-like C2-type domains lie at 32–120, 120–222, 216–330, 335–426, 433–553, 556–667, and 676–762; these read PTLN…SVAV, VYVF…VAVV, PYIV…ASLI, PFIA…RTFQ, PRIF…VIVF, TRFL…LLHN, and SRIV…ARIS. Residues asparagine 35, asparagine 44, asparagine 66, asparagine 97, asparagine 161, asparagine 209, asparagine 247, asparagine 272, asparagine 303, asparagine 307, asparagine 407, asparagine 501, asparagine 560, asparagine 621, asparagine 631, asparagine 640, asparagine 681, asparagine 688, and asparagine 713 are each glycosylated (N-linked (GlcNAc...) asparagine). 2 disulfide bridges follow: cysteine 53–cysteine 104 and cysteine 153–cysteine 203. Cysteine 248 and cysteine 314 are joined by a disulfide. Cysteine 457 and cysteine 538 are disulfide-bonded. A disulfide bridge links cysteine 579 with cysteine 651. A disulfide bridge links cysteine 697 with cysteine 746. A helical transmembrane segment spans residues 775–795; sequence IMPIGAVVIAMFLWLLIVFVI. Residues 796 to 1357 are Cytoplasmic-facing; it reads RNRKRPNDGD…AEVRYSAPPV (562 aa). A Protein kinase domain is found at 843–1173; the sequence is LKLGEPLGRG…FTQLVEHLGN (331 aa). Residues 849–857 and lysine 877 contribute to the ATP site; that span reads LGRGAFGQV. The tract at residues 944–975 is disordered; that stretch reads YSPYKKRTPRMPNRREVQQDEDPREGDLGLGT. The Proton acceptor role is filled by aspartate 1039. Phosphotyrosine; by autocatalysis is present on residues tyrosine 1065, tyrosine 1070, tyrosine 1186, and tyrosine 1222. The interval 1296–1357 is disordered; that stretch reads SLASESSNQT…AEVRYSAPPV (62 aa). Over residues 1298 to 1312 the composition is skewed to polar residues; sequence ASESSNQTSGYQSGY.

This sequence belongs to the protein kinase superfamily. Tyr protein kinase family. CSF-1/PDGF receptor subfamily. In terms of assembly, interacts with isoform VEGF165 of vegfaa and, to a lesser extent, with isoform VEGF171 of vegfab. Interacts (via juxtamembrane region) with chaperone pdcl3 (via thioredoxin fold region); the interaction leads to increased vegfr2 abundance through inhibition of its ubiquitination and degradation. In terms of tissue distribution, first expressed in embryos between 5- and 7-somites in the bilateral stripes that contain the developing angioblasts, and then localized to the intermediate cell mass (ICM) and the developing vasculature. By 30 hpf, expressed in the major trunk, head and intersomitic vessels, persisting through 4 dpf when expression is seen in developing subintestinal veins and in the remaining vasculature.

The protein resides in the cell membrane. It is found in the cytoplasm. Its subcellular location is the nucleus. The protein localises to the cytoplasmic vesicle. It localises to the early endosome. The protein resides in the cell junction. It is found in the endoplasmic reticulum. It carries out the reaction L-tyrosyl-[protein] + ATP = O-phospho-L-tyrosyl-[protein] + ADP + H(+). Receptor for VEGF or VEGFC. Has a tyrosine-protein kinase activity. Combinations of multiple VEGF receptors are required for development of different blood vessel types in the embryo. Involved in angiogenesis, specifically in VEGF-induced sprouting of new blood vessels. Particularly involved in artery formation. Does not appear to be required for hematopoiesis. The protein is Vascular endothelial growth factor receptor 2 of Danio rerio (Zebrafish).